The sequence spans 182 residues: Probable phosphoheptose isomerase (182 aa).

Residues 29–182 (ISSAISSGNK…MICAMIDEKF (154 aa)) enclose the SIS domain. Residue 44–46 (NGG) coordinates substrate. 2 residues coordinate Zn(2+): H53 and E57. Residues E57, 86–87 (ND), 112–114 (STS), S117, and Q164 each bind substrate. Zn(2+) contacts are provided by Q164 and H172.

It belongs to the SIS family. GmhA subfamily. Zn(2+) is required as a cofactor.

The protein localises to the cytoplasm. It carries out the reaction 2 D-sedoheptulose 7-phosphate = D-glycero-alpha-D-manno-heptose 7-phosphate + D-glycero-beta-D-manno-heptose 7-phosphate. It functions in the pathway carbohydrate biosynthesis; D-glycero-D-manno-heptose 7-phosphate biosynthesis; D-glycero-alpha-D-manno-heptose 7-phosphate and D-glycero-beta-D-manno-heptose 7-phosphate from sedoheptulose 7-phosphate: step 1/1. Its function is as follows. Catalyzes the isomerization of sedoheptulose 7-phosphate in D-glycero-D-manno-heptose 7-phosphate. This chain is Probable phosphoheptose isomerase, found in Thermoplasma acidophilum (strain ATCC 25905 / DSM 1728 / JCM 9062 / NBRC 15155 / AMRC-C165).